Here is a 394-residue protein sequence, read N- to C-terminus: uncharacterized protein (394 aa).

The next 12 membrane-spanning stretches (helical) occupy residues 13 to 35 (AIIG…VPVL), 50 to 72 (VGVA…GWLS), 79 to 97 (LIIN…IAWS), 107 to 129 (GRGL…ELVL), 136 to 158 (IMGL…SPII), 168 to 190 (FLIN…PASL), 218 to 240 (INLS…PVEL), 250 to 272 (VPEI…CICF), 277 to 299 (VLYS…GIFL), 309 to 331 (ILGL…ALVN), 344 to 366 (AIYS…ILFS), and 371 to 393 (FEVL…LYLI).

It belongs to the major facilitator superfamily.

Its subcellular location is the cell membrane. This is an uncharacterized protein from Buchnera aphidicola subsp. Baizongia pistaciae (strain Bp).